Reading from the N-terminus, the 319-residue chain is MTLITLIINPLMYIIPILLAMAFLTLVERKMLGYMQLRKGPNIVGPYGLLQPIADGVKLFIKEPVKPSTSSPTLFLLTPTLALTLALILWIPLPMPLALTDLNLTILFILAVSSLSVYSILGSGWASNSKYALIGALRAVAQTISYEVTLGLIIISLIMFTGGFTLTTFNTAQEAVWLILPAWPLAAMWFISTLAETNRAPFDLTEGESELVSGFNVEYAGGPFALFFLAEYTNILLMNALSTILFLGPSFNTLTINLNWAIKTMILASMFLWVRASYPRFRYDQLMHLVWKNFLPLTLALITWHISLPISMAGSPPQL.

8 helical membrane-spanning segments follow: residues 3-23, 74-94, 106-126, 149-169, 175-195, 226-246, 254-274, and 294-314; these read LITLIINPLMYIIPILLAMAF, LFLLTPTLALTLALILWIPLP, ILFILAVSSLSVYSILGSGWA, TLGLIIISLIMFTGGFTLTTF, AVWLILPAWPLAAMWFISTLA, LFFLAEYTNILLMNALSTILF, LTINLNWAIKTMILASMFLWV, and FLPLTLALITWHISLPISMAG.

The protein belongs to the complex I subunit 1 family.

It localises to the mitochondrion inner membrane. It carries out the reaction a ubiquinone + NADH + 5 H(+)(in) = a ubiquinol + NAD(+) + 4 H(+)(out). Core subunit of the mitochondrial membrane respiratory chain NADH dehydrogenase (Complex I) that is believed to belong to the minimal assembly required for catalysis. Complex I functions in the transfer of electrons from NADH to the respiratory chain. The immediate electron acceptor for the enzyme is believed to be ubiquinone. In Polypterus ornatipinnis (Ornate bichir), this protein is NADH-ubiquinone oxidoreductase chain 1 (MT-ND1).